A 212-amino-acid polypeptide reads, in one-letter code: MRIGILGGTFDPIHYGHIRPAMEVKASLKLDNILLMPNHIPPHKNTTHSSTAQRLEMVAQVCEALTGFELCDIEAKRNSPSYTVVTLKQLSRLYPDDELFFIMGMDSFIHLQSWHKWQQLFELANIVVCQRPGWHLAEGHPMQHELSARHATLEALSHSSAPQHGRIFTVDISPQDISSTQIRSQLAMGEIPQDALLPVTLNYIQKQRLYFS.

It belongs to the NadD family.

The enzyme catalyses nicotinate beta-D-ribonucleotide + ATP + H(+) = deamido-NAD(+) + diphosphate. Its pathway is cofactor biosynthesis; NAD(+) biosynthesis; deamido-NAD(+) from nicotinate D-ribonucleotide: step 1/1. Catalyzes the reversible adenylation of nicotinate mononucleotide (NaMN) to nicotinic acid adenine dinucleotide (NaAD). In Shewanella sp. (strain MR-4), this protein is Probable nicotinate-nucleotide adenylyltransferase.